A 251-amino-acid polypeptide reads, in one-letter code: Coproheme decarboxylase (251 aa).

Fe-coproporphyrin III is bound by residues arginine 133, 147–151 (YPMSK), histidine 174, glutamine 187, and serine 225. Tyrosine 147 is an active-site residue.

It belongs to the ChdC family. Type 1 subfamily. It depends on Fe-coproporphyrin III as a cofactor.

It carries out the reaction Fe-coproporphyrin III + 2 H2O2 + 2 H(+) = heme b + 2 CO2 + 4 H2O. It catalyses the reaction Fe-coproporphyrin III + H2O2 + H(+) = harderoheme III + CO2 + 2 H2O. The enzyme catalyses harderoheme III + H2O2 + H(+) = heme b + CO2 + 2 H2O. The protein operates within porphyrin-containing compound metabolism; protoheme biosynthesis. Its function is as follows. Involved in coproporphyrin-dependent heme b biosynthesis. Catalyzes the decarboxylation of Fe-coproporphyrin III (coproheme) to heme b (protoheme IX), the last step of the pathway. The reaction occurs in a stepwise manner with a three-propionate intermediate. This Listeria innocua serovar 6a (strain ATCC BAA-680 / CLIP 11262) protein is Coproheme decarboxylase.